Reading from the N-terminus, the 335-residue chain is Partner of xrn-2 protein 1 (335 aa).

Residues 7–91 enclose the XRN2-binding (XTBD) domain; that stretch reads VEAEKKLWES…SYVKASAAKK (85 aa). The disordered stretch occupies residues 95-119; the sequence is VKTSDLEGASDESKKVKMEKSPSPV. Positions 105–114 are enriched in basic and acidic residues; that stretch reads DESKKVKMEK.

Interacts (via N-terminus) with xrn-2; the interaction is direct.

It is found in the nucleus. Its subcellular location is the nucleolus. The protein resides in the nucleoplasm. Functionally, plays a role in maintenance of steady-state concentration and turnover of microRNAs (miRNA) by degradation of mature miRNA in complex with the exoribonuclease xrn-2. Stabilizes and enhances the accumulation and activity of the exoribonuclease xrn-2, and thus contributes to miRNA turnover. The sequence is that of Partner of xrn-2 protein 1 from Caenorhabditis elegans.